A 1272-amino-acid polypeptide reads, in one-letter code: uncharacterized protein (1272 aa).

Coiled-coil stretches lie at residues Ile185–Asn212, Lys246–Ala274, and Ala607–Ile640. The segment at Glu1179 to Thr1231 is disordered. The span at Val1189 to Pro1203 shows a compositional bias: pro residues. Low complexity predominate over residues Pro1219–Thr1231.

This is an uncharacterized protein from Magallana gigas (Pacific oyster).